A 570-amino-acid polypeptide reads, in one-letter code: MFS-type transporter ptmT (570 aa).

A compositionally biased stretch (polar residues) spans Met-1 to Thr-11. The interval Met-1–Gln-34 is disordered. 14 helical membrane-spanning segments follow: residues Gly-50–Leu-70, Trp-94–Tyr-114, Trp-121–Pro-141, Ala-151–Ile-171, Ala-182–Phe-202, Trp-210–Met-230, Gly-247–Leu-267, Asn-278–Ile-298, Ile-323–Phe-343, Ile-356–Ile-376, Val-379–Leu-399, Ile-413–Val-433, Val-445–Ala-465, and Val-517–Ile-537. An N-linked (GlcNAc...) asparagine glycan is attached at Asn-541. The disordered stretch occupies residues Pro-550–Thr-570. Positions Gly-561–Thr-570 are enriched in basic and acidic residues.

It belongs to the major facilitator superfamily. TCR/Tet family.

It localises to the cell membrane. MFS-type transporter; part of the gene cluster that mediates the biosynthesis of the indole diterpenes penitrems. May be involved in the efflux of penitrems. The chain is MFS-type transporter ptmT from Penicillium ochrochloron.